Here is a 178-residue protein sequence, read N- to C-terminus: Alkyl hydroperoxide reductase AhpD (178 aa).

The Proton donor role is filled by cysteine 131. A disulfide bond links cysteine 131 and cysteine 134. Cysteine 134 functions as the Cysteine sulfenic acid (-SOH) intermediate in the catalytic mechanism.

This sequence belongs to the AhpD family.

It catalyses the reaction N(6)-[(R)-dihydrolipoyl]-L-lysyl-[lipoyl-carrier protein] + a hydroperoxide = N(6)-[(R)-lipoyl]-L-lysyl-[lipoyl-carrier protein] + an alcohol + H2O. Functionally, antioxidant protein with alkyl hydroperoxidase activity. Required for the reduction of the AhpC active site cysteine residues and for the regeneration of the AhpC enzyme activity. This chain is Alkyl hydroperoxide reductase AhpD, found in Methylocella silvestris (strain DSM 15510 / CIP 108128 / LMG 27833 / NCIMB 13906 / BL2).